The primary structure comprises 277 residues: Mannosyl-3-phosphoglycerate phosphatase (277 aa).

D13 serves as the catalytic Nucleophile. D13, D15, and D219 together coordinate Mg(2+).

Belongs to the HAD-like hydrolase superfamily. MPGP family. It depends on Mg(2+) as a cofactor.

It is found in the cytoplasm. The catalysed reaction is 2-O-(alpha-D-mannosyl)-3-phosphoglycerate + H2O = (2R)-2-O-(alpha-D-mannosyl)-glycerate + phosphate. It participates in carbohydrate biosynthesis; 2-(alpha-D-mannosyl)-D-glycerate biosynthesis; 2-(alpha-D-mannosyl)-D-glycerate from GDP-alpha-D-mannose (MPG route): step 2/2. Its function is as follows. Hydrolyzes mannosyl-3-phosphoglycerate (MPG) to form the osmolyte mannosylglycerate (MG). The sequence is that of Mannosyl-3-phosphoglycerate phosphatase from Aeropyrum pernix (strain ATCC 700893 / DSM 11879 / JCM 9820 / NBRC 100138 / K1).